A 128-amino-acid chain; its full sequence is Large ribosomal subunit protein bL12 (128 aa).

The segment at 97–128 (GAPSTLKEGVSKEDAEEAKKQLTEAGATVEVK) is disordered. Positions 105–118 (GVSKEDAEEAKKQL) are enriched in basic and acidic residues.

This sequence belongs to the bacterial ribosomal protein bL12 family. As to quaternary structure, homodimer. Part of the ribosomal stalk of the 50S ribosomal subunit. Forms a multimeric L10(L12)X complex, where L10 forms an elongated spine to which 2 to 4 L12 dimers bind in a sequential fashion. Binds GTP-bound translation factors.

Its function is as follows. Forms part of the ribosomal stalk which helps the ribosome interact with GTP-bound translation factors. Is thus essential for accurate translation. This chain is Large ribosomal subunit protein bL12, found in Lawsonia intracellularis (strain PHE/MN1-00).